Consider the following 256-residue polypeptide: Major prion protein 2 (256 aa).

The first 24 residues, 1–24 (MVKSHIGSWILVLFVAMWSDVALC), serve as a signal peptide directing secretion. Positions 25-233 (KKRPKPGGGW…ESEAYYQRGA (209 aa)) are interaction with GRB2, ERI3 and SYN1. The disordered stretch occupies residues 28–110 (PKPGGGWNTG…QWNKPSKPKT (83 aa)). A run of 5 repeats spans residues 54-62 (PQEGGDWGQ), 63-70 (PHGGGWGQ), 71-78 (PHVGGWGQ), 79-86 (PHGGGWGQ), and 87-95 (PHGGGGWGQ). The tract at residues 54–95 (PQEGGDWGQPHGGGWGQPHVGGWGQPHGGGWGQPHGGGGWGQ) is 5 X 8 AA tandem repeats of P-H-G-G-G-W-G-Q. The span at 58 to 99 (GDWGQPHGGGWGQPHVGGWGQPHGGGWGQPHGGGGWGQGGTH) shows a compositional bias: gly residues. Positions 64, 65, 66, 72, 74, 80, 81, 82, 88, 90, and 91 each coordinate Cu(2+). A disulfide bond links Cys182 and Cys217. Residues Asn184 and Asn200 are each glycosylated (N-linked (GlcNAc...) asparagine). Ala233 carries the GPI-anchor amidated alanine lipid modification. A propeptide spans 234 to 256 (SVILFSSPPVILLISFLIFLIVG) (removed in mature form).

This sequence belongs to the prion family. Monomer and homodimer. Has a tendency to aggregate into amyloid fibrils containing a cross-beta spine, formed by a steric zipper of superposed beta-strands. Soluble oligomers may represent an intermediate stage on the path to fibril formation. Copper binding may promote oligomerization. Interacts with GRB2, APP, ERI3/PRNPIP and SYN1. Mislocalized cytosolically exposed PrP interacts with MGRN1; this interaction alters MGRN1 subcellular location and causes lysosomal enlargement. Interacts with KIAA1191.

Its subcellular location is the cell membrane. It is found in the golgi apparatus. Its function is as follows. Its primary physiological function is unclear. Has cytoprotective activity against internal or environmental stresses. May play a role in neuronal development and synaptic plasticity. May be required for neuronal myelin sheath maintenance. May play a role in iron uptake and iron homeostasis. Soluble oligomers are toxic to cultured neuroblastoma cells and induce apoptosis (in vitro). Association with GPC1 (via its heparan sulfate chains) targets PRNP to lipid rafts. Also provides Cu(2+) or Zn(2+) for the ascorbate-mediated GPC1 deaminase degradation of its heparan sulfate side chains. This Tragelaphus strepsiceros (Greater kudu) protein is Major prion protein 2.